Here is a 426-residue protein sequence, read N- to C-terminus: Histidine--tRNA ligase (426 aa).

It belongs to the class-II aminoacyl-tRNA synthetase family. Homodimer.

It localises to the cytoplasm. It carries out the reaction tRNA(His) + L-histidine + ATP = L-histidyl-tRNA(His) + AMP + diphosphate + H(+). The polypeptide is Histidine--tRNA ligase (Prochlorococcus marinus (strain MIT 9312)).